The following is a 184-amino-acid chain: Ribosome maturation factor RimM (184 aa).

The region spanning 112-184 is the PRC barrel domain; sequence TDSYYWIDLI…SNKTISLDWQ (73 aa).

It belongs to the RimM family. As to quaternary structure, binds ribosomal protein uS19.

The protein resides in the cytoplasm. Functionally, an accessory protein needed during the final step in the assembly of 30S ribosomal subunit, possibly for assembly of the head region. Essential for efficient processing of 16S rRNA. May be needed both before and after RbfA during the maturation of 16S rRNA. It has affinity for free ribosomal 30S subunits but not for 70S ribosomes. The sequence is that of Ribosome maturation factor RimM from Polynucleobacter necessarius subsp. necessarius (strain STIR1).